A 60-amino-acid polypeptide reads, in one-letter code: UPF0434 protein mma_2578 (60 aa).

It belongs to the UPF0434 family.

The chain is UPF0434 protein mma_2578 from Janthinobacterium sp. (strain Marseille) (Minibacterium massiliensis).